Reading from the N-terminus, the 203-residue chain is Chemotactic transduction protein ChpE (203 aa).

5 helical membrane passes run 3 to 23, 46 to 66, 69 to 89, 123 to 143, and 149 to 169; these read AIFL…GAVF, LIGD…LLGY, VRIP…VQGL, NVVY…GTPN, and VFFA…AALV.

This sequence belongs to the Rht family.

It localises to the cell membrane. In Pseudomonas aeruginosa (strain ATCC 15692 / DSM 22644 / CIP 104116 / JCM 14847 / LMG 12228 / 1C / PRS 101 / PAO1), this protein is Chemotactic transduction protein ChpE (chpE).